We begin with the raw amino-acid sequence, 270 residues long: Phosphatidylglycerol--prolipoprotein diacylglyceryl transferase (270 aa).

The next 4 helical transmembrane spans lie at 19-39 (FPVYWYGIIIGTGVLLGLWLA), 56-76 (LVLIAVPIAILFARMYYVIFE), 92-112 (QGGLAIHGGLIGAVITGVLFA), and 116-136 (GVSFWKLADIAAPSILLGQAI). Arg138 provides a ligand contact to a 1,2-diacyl-sn-glycero-3-phospho-(1'-sn-glycerol). 3 helical membrane passes run 178-198 (HPTFLYESLWNFAGVILLLAL), 206-226 (GELFFTYLIWYSVGRFFVEGL), and 236-256 (LRIAQVMSIGLVVISIIFIIV).

The protein belongs to the Lgt family.

It localises to the cell membrane. It catalyses the reaction L-cysteinyl-[prolipoprotein] + a 1,2-diacyl-sn-glycero-3-phospho-(1'-sn-glycerol) = an S-1,2-diacyl-sn-glyceryl-L-cysteinyl-[prolipoprotein] + sn-glycerol 1-phosphate + H(+). Its pathway is protein modification; lipoprotein biosynthesis (diacylglyceryl transfer). Its function is as follows. Catalyzes the transfer of the diacylglyceryl group from phosphatidylglycerol to the sulfhydryl group of the N-terminal cysteine of a prolipoprotein, the first step in the formation of mature lipoproteins. The chain is Phosphatidylglycerol--prolipoprotein diacylglyceryl transferase from Bacillus cereus (strain B4264).